Consider the following 1004-residue polypeptide: Protein phosphatase 1 regulatory subunit 12A (1004 aa).

Positions 35–38 are important for interaction with PPP1CB; that stretch reads KVKF. 6 ANK repeats span residues 39-68, 72-101, 105-134, 138-164, 198-227, and 231-260; these read DDGA…DINY, DGLT…NINQ, EGWI…HVGA, EGDT…RQGV, SGGT…DVNI, and DGWT…DMEA. Residues 291-300 are compositionally biased toward basic and acidic residues; it reads HSEKREKKSP. The disordered stretch occupies residues 291–920; it reads HSEKREKKSP…SYLEDRKPYC (630 aa). The span at 302 to 316 shows a compositional bias: polar residues; the sequence is IESTANLDNNQTQKT. 2 stretches are compositionally biased toward basic and acidic residues: residues 318–329 and 336–353; these read KNKETLIMEQEK and SLEH…KDES. Residues 357–369 are compositionally biased toward acidic residues; it reads SEEEEDDDSESEA. Residues 378–392 show a composition bias toward polar residues; it reads ANANTTSTQSASMTA. The segment covering 417 to 427 has biased composition (basic and acidic residues); the sequence is SPKEEERKDES. Residues 464-475 are compositionally biased toward low complexity; sequence RSASSPRLSSSL. The span at 476 to 486 shows a compositional bias: basic and acidic residues; it reads DNKEKEKDGKG. Low complexity predominate over residues 514–525; it reads SSASSIRSGSSY. The segment covering 528–538 has biased composition (basic and acidic residues); it reads RKWEEDVKKNS. The span at 539–554 shows a compositional bias: polar residues; that stretch reads LNEGPTSLNTSYQRSG. 2 stretches are compositionally biased toward low complexity: residues 564–578 and 587–602; these read VSSN…VTSS and ASAN…STSA. A compositionally biased stretch (basic and acidic residues) spans 613–624; that stretch reads WAEDSTEKEKDS. A compositionally biased stretch (low complexity) spans 625 to 659; that stretch reads VPTAVTVPVAPSVVNAAATTTAMTTATSGTVSSTS. A compositionally biased stretch (basic and acidic residues) spans 672–681; that stretch reads VRDEESESQR. The segment covering 682 to 692 has biased composition (basic residues); that stretch reads KARSRQARQSR. T695 carries the phosphothreonine; by ROCK2 modification. The segment covering 717 to 765 has biased composition (basic and acidic residues); that stretch reads RTREQENEEKEKEEKEKQDKEKQEEKKESETKDDDYRQRYSRTVEEPYH. Positions 770–793 are enriched in low complexity; it reads TSTSTSTSSTSSLSTSTSSLSSSS. Positions 794–808 are enriched in polar residues; that stretch reads QLNRPNSLIGITSAY. Basic and acidic residues predominate over residues 812–837; the sequence is GTKESEREGGKKEEEKEEDKSQPKSI. Positions 838–849 are enriched in basic residues; it reads RERRRPREKRRS. The residue at position 850 (T850) is a Phosphothreonine; by ROCK2. Basic and acidic residues predominate over residues 864–880; it reads QEHQSDSEEGTNKKETQ. The span at 881–896 shows a compositional bias: polar residues; the sequence is SDSLSRYDTGSLSVSS.

In terms of assembly, PP1 comprises a catalytic subunit, PPP1CA, PPP1CB or PPP1CC, and one or several targeting or regulatory subunits. PPP1R12A mediates binding to myosin. In terms of processing, phosphorylated by CIT (Rho-associated kinase) and by ROCK2 on serine and threonine residues. Phosphorylation at Thr-695 leads to inhibition of myosin phosphatase activity. Phosphorylation at Thr-850 abolishes myosin binding. May be phosphorylated at Thr-695 by DMPK; may inhibit the myosin phosphatase activity. Detected in brain, lung, aorta, heart, gizzard, stomach, oviduct, spleen, kidney and small intestine.

The protein localises to the cytoplasm. It is found in the cytoskeleton. The protein resides in the stress fiber. Regulates myosin phosphatase activity. The polypeptide is Protein phosphatase 1 regulatory subunit 12A (PPP1R12A) (Gallus gallus (Chicken)).